A 777-amino-acid polypeptide reads, in one-letter code: Endonuclease MutS2 (777 aa).

Residue 328–335 (GPNTGGKT) participates in ATP binding. The 76-residue stretch at 702 to 777 (LDIRGMNTLE…GDGATEVYLK (76 aa)) folds into the Smr domain.

It belongs to the DNA mismatch repair MutS family. MutS2 subfamily. Homodimer. Binds to stalled ribosomes, contacting rRNA.

Its function is as follows. Endonuclease that is involved in the suppression of homologous recombination and thus may have a key role in the control of bacterial genetic diversity. Functionally, acts as a ribosome collision sensor, splitting the ribosome into its 2 subunits. Detects stalled/collided 70S ribosomes which it binds and splits by an ATP-hydrolysis driven conformational change. Acts upstream of the ribosome quality control system (RQC), a ribosome-associated complex that mediates the extraction of incompletely synthesized nascent chains from stalled ribosomes and their subsequent degradation. Probably generates substrates for RQC. This Carboxydothermus hydrogenoformans (strain ATCC BAA-161 / DSM 6008 / Z-2901) protein is Endonuclease MutS2.